Here is a 735-residue protein sequence, read N- to C-terminus: Two pore calcium channel protein 1B (735 aa).

The Cytoplasmic portion of the chain corresponds to 1–76 (MEEYLLPGES…ELYFMFTRFD (76 aa)). A helical transmembrane segment spans residues 77-97 (FLWSLNYLALVVLNFFEKPLW). Topologically, residues 98-125 (CSKHLAESCNNRDYYYLGELPFLTGAES) are extracellular. Residues 126-146 (LIFEGVTLLLLIIHILFPISY) form a helical membrane-spanning segment. Residues 147-161 (EGFNLYWRSLLNRLK) are Cytoplasmic-facing. The chain crosses the membrane as a helical span at residues 162 to 182 (VILLLILVADIVVYILLPADF). A topological domain (extracellular) is located at residue tyrosine 183. Residues 184-202 (YLPFRIAPYLRVVFFILNI) form a helical; Voltage-sensor membrane-spanning segment. At 203 to 208 (RELRDS) the chain is on the cytoplasmic side. The helical transmembrane segment at 209-229 (FFILAGMLGTYLNVVALSALF) threads the bilayer. Residues 230–248 (LLFSSWLAYVFFEDTRQGK) lie on the Extracellular side of the membrane. Positions 249-263 (TTFTSYGTTLYQMFV) form an intramembrane region, pore-forming. Topologically, residues 264-286 (LFTTSNNPDVWIPAYKDSRWYCL) are extracellular. Residues 287–307 (FFVLYVLLGVYFVTNLILAVV) traverse the membrane as a helical segment. At 308–431 (YDSFKSELVK…ASEKLRGFIR (124 aa)) the chain is on the cytoplasmic side. 2 EF-hand domains span residues 325–360 (LRLR…LNKY) and 366–401 (ISGD…IGLR). Residues 432-452 (GATFEYIIVFVLLVNLVAVII) form a helical membrane-spanning segment. At 453 to 470 (ETTLDIQNNSGQTFWQKV) the chain is on the extracellular side. Asparagine 460 carries N-linked (GlcNAc...) asparagine glycosylation. The chain crosses the membrane as a helical span at residues 471–491 (EFTFGWLYVIEMALKVYTYGF). Residues 492-501 (ENYWRDGQNR) lie on the Cytoplasmic side of the membrane. A helical membrane pass occupies residues 502–522 (FDFIVTWVIVIGETTTFVAPD). The Extracellular portion of the chain corresponds to 523–531 (DLTFLSNGE). The chain crosses the membrane as a helical; Voltage-sensor span at residues 532–549 (WIRYLLIARMLRLIRLLM). The Cytoplasmic segment spans residues 550–560 (HVERYRAFVAT). Residues 561-581 (FLTLIPSLMPYLGTIFCILCF) traverse the membrane as a helical segment. Residues 582-618 (YCSLGLQIFGGIVNTGNPNLAQTDLAGNDYLLFNFND) lie on the Extracellular side of the membrane. The pore-forming intramembrane region spans 619–633 (YPNGMVTLFNILVMG). Over 634–654 (NWQVWMQSYKELTGTSWTYAY) the chain is Extracellular. Residues 655–675 (FVSFYLISVLWLLNLIVAFVL) traverse the membrane as a helical segment. Residues 676–735 (EAFQAEMDLEASARCVDGDDKEAKRERRRNVGTKTRSQRVDFLLHHMLRSELTECSNDNP) are Cytoplasmic-facing.

It belongs to the calcium channel alpha-1 subunit (TC 1.A.1.11) family. Two pore calcium channel subfamily. Homodimer.

It is found in the membrane. Inhibited by Al(3+), La(3+) and Gd(3+). Up-regulated by H(2)O(2), cryptogein, salicylic acid (SA) and cold shock. Functions as a voltage-gated inward-rectifying Ca(2+) channel (VDCC) across the plasma membrane that mediates sucrose-induced Ca(2+) influx in autotrophically grown leaf cells. Acts as the major ROS-responsive Ca(2+) channel and is the possible target of Al-dependent inhibition. Plays a regulatory role in defense responses. This chain is Two pore calcium channel protein 1B (TPC1B), found in Nicotiana tabacum (Common tobacco).